The primary structure comprises 201 residues: Recombination protein RecR (201 aa).

The C4-type zinc finger occupies 59 to 74 (CEICGNMDTENICRIC). One can recognise a Toprim domain in the interval 82–177 (SIIAIVETVA…KISRLASGIP (96 aa)).

This sequence belongs to the RecR family.

Functionally, may play a role in DNA repair. It seems to be involved in an RecBC-independent recombinational process of DNA repair. It may act with RecF and RecO. The sequence is that of Recombination protein RecR from Rickettsia rickettsii (strain Iowa).